The chain runs to 314 residues: Protein nutcracker (314 aa).

The interval 1–62 (MSDTKSEIEG…PRLIQEKSTQ (62 aa)) is disordered. Positions 21–34 (QQQQQPQQQQNEQQ) are enriched in low complexity. Positions 257 to 314 (MQMEMKLQPSLLGLPDELYFEIFRYLDKSQLNVVARVNRHLHFYSKEVERKRLKGGRS) are required for interaction with skpA and Cul1, but not with PI31. Residues 264-309 (QPSLLGLPDELYFEIFRYLDKSQLNVVARVNRHLHFYSKEVERKRL) enclose the F-box domain.

Component of an SCF (SKP1-CUL1-F-box protein) E3 ubiquitin-protein ligase complex, at least composed of ntc, skpA and Cul1. Interacts (via F-box domain) with skpA and Cul1. Interacts with Prosalpha7 and PI31. Interacts with Bruce. In terms of tissue distribution, expressed in testis (at protein level).

Its subcellular location is the cytoplasm. In terms of biological role, functions together with PI31 to control non-apoptotic caspase activation during sperm individualization. Positively regulates PI31 stability. The chain is Protein nutcracker from Drosophila melanogaster (Fruit fly).